We begin with the raw amino-acid sequence, 1909 residues long: DENN domain-containing protein 4C (1909 aa).

One can recognise an MABP domain in the interval 40 to 199; it reads KAPITDIAII…SVFLCYKKSV (160 aa). The uDENN domain occupies 191–364; it reads VFLCYKKSVP…NIPFPSPQRP (174 aa). The cDENN domain occupies 385–521; the sequence is PLPLSGANFS…PCKNLLSTLK (137 aa). The 119-residue stretch at 523–641 folds into the dDENN domain; that stretch reads LYPQLSSVHQ…CSFVSDKDTG (119 aa). 3 positions are modified to phosphoserine: serine 703, serine 737, and serine 741. The stretch at 821–855 is one PPR repeat; that stretch reads VCYRVVMQLCGLWGHPVLAVRVLFEMKTARIKPNA. Phosphoserine is present on residues glutamate 953, serine 965, serine 968, and serine 973. Phosphothreonine is present on threonine 975. Residues serine 989, serine 996, serine 1003, serine 1046, serine 1061, serine 1099, serine 1126, serine 1184, serine 1225, serine 1244, serine 1252, and serine 1278 each carry the phosphoserine modification. Disordered stretches follow at residues 1243 to 1263 and 1277 to 1338; these read KSPL…NRES and SSLP…HGSL. The segment covering 1296–1316 has biased composition (polar residues); that stretch reads SSPAVSRSKTFTGRFKQQTPS. A phosphoserine mark is found at serine 1325, serine 1337, and serine 1346. A disordered region spans residues 1419–1474; the sequence is SGLVPSELTQSNTSLGSSSSSGDVGKLHYPTGEVPFPRGMKGQDFEKSDHGSSQNT. Residues 1426 to 1440 are compositionally biased toward low complexity; the sequence is LTQSNTSLGSSSSSG. Over residues 1459–1468 the composition is skewed to basic and acidic residues; that stretch reads KGQDFEKSDH. Serine 1623, serine 1627, serine 1629, serine 1640, and serine 1799 each carry phosphoserine.

Post-translationally, phosphorylated in response to insulin.

The protein resides in the cytoplasmic vesicle membrane. Its subcellular location is the cell membrane. The protein localises to the cytoplasm. It localises to the cytosol. Functionally, guanine nucleotide exchange factor (GEF) activating RAB10. Promotes the exchange of GDP to GTP, converting inactive GDP-bound RAB10 into its active GTP-bound form. Thereby, stimulates SLC2A4/GLUT4 glucose transporter-enriched vesicles delivery to the plasma membrane in response to insulin. This chain is DENN domain-containing protein 4C (DENND4C), found in Homo sapiens (Human).